The sequence spans 180 residues: Isopentenyl-diphosphate Delta-isomerase (180 aa).

Residues H26 and H32 each coordinate Mn(2+). In terms of domain architecture, Nudix hydrolase spans 30-168 (ALHLAFSVLL…PELFTAWFPQ (139 aa)). Residue C70 is part of the active site. Mg(2+) is bound at residue C70. H72 is a Mn(2+) binding site. A Mg(2+)-binding site is contributed by E90. Mn(2+) is bound by residues E117 and E119. The active site involves E119.

Belongs to the IPP isomerase type 1 family. The cofactor is Mg(2+). Requires Mn(2+) as cofactor.

Its subcellular location is the cytoplasm. It carries out the reaction isopentenyl diphosphate = dimethylallyl diphosphate. It functions in the pathway isoprenoid biosynthesis; dimethylallyl diphosphate biosynthesis; dimethylallyl diphosphate from isopentenyl diphosphate: step 1/1. In terms of biological role, catalyzes the 1,3-allylic rearrangement of the homoallylic substrate isopentenyl (IPP) to its highly electrophilic allylic isomer, dimethylallyl diphosphate (DMAPP). The chain is Isopentenyl-diphosphate Delta-isomerase from Photobacterium profundum (strain SS9).